The chain runs to 369 residues: Proton-coupled zinc antiporter SLC30A8 (369 aa).

At 1-79 the chain is on the cytoplasmic side; that stretch reads MEFLERTYLV…AKWKLCSASA (79 aa). The disordered stretch occupies residues 31–52; sequence PVNKDQCPRERPEELESGGMYH. Positions 32-44 are enriched in basic and acidic residues; it reads VNKDQCPRERPEE. 3 residues coordinate Zn(2+): H52, C53, and H54. Positions 52–54 match the HCH Motif; seals regulatory zinc-binding pocket motif; the sequence is HCH. Residues 80 to 100 form a helical membrane-spanning segment; it reads ICFIFMIAEVVGGHIAGSLAV. Over 101-103 the chain is Lumenal, vesicle; that stretch reads VTD. The chain crosses the membrane as a helical span at residues 104-124; it reads AAHLLIDLTSFLLSLFSLWLS. Residues H106, D110, and H137 each contribute to the Zn(2+) site. The Cytoplasmic portion of the chain corresponds to 125–140; sequence SKPPSKRLTFGWHRAE. A helical transmembrane segment spans residues 141–161; sequence ILGALLSILCIWVVTGVLVYL. The Lumenal, vesicle portion of the chain corresponds to 162–175; the sequence is ACERLLYPDYQIQA. A helical transmembrane segment spans residues 176–196; the sequence is TVMIIVSSCAVAANIVLTVVL. Residues 197–217 lie on the Cytoplasmic side of the membrane; the sequence is HQRCLGHNHKEVQANASVRAA. The helical transmembrane segment at 218-238 threads the bilayer; that stretch reads FVHALGDLFQSISVLISALII. H220 and D224 together coordinate Zn(2+). Over 239–245 the chain is Lumenal, vesicle; the sequence is YFKPEYK. The helical transmembrane segment at 246–266 threads the bilayer; the sequence is IADPICTFIFSILVLASTITI. Topologically, residues 267 to 369 are cytoplasmic; it reads LKDFSILLME…DCLFCEDPCD (103 aa). Zn(2+)-binding residues include H301, H318, H345, E352, C361, and C364.

It belongs to the cation diffusion facilitator (CDF) transporter (TC 2.A.4) family. SLC30A subfamily. Homodimer. In the endocrine pancreas, expressed in insulin-producing beta cells. Expressed at relatively high levels in subcutaneous fat tissue from lean persons; much lower levels in visceral fat, whether from lean or obese individuals, and in subcutaneous fat tissue from obese individuals. Expressed in peripheral blood mononuclear cells, including T-cells and B-cells, with great variation among individuals ranging from negative to strongly positive.

It localises to the cytoplasmic vesicle. It is found in the secretory vesicle membrane. Its subcellular location is the cell membrane. It catalyses the reaction Zn(2+)(in) + 2 H(+)(out) = Zn(2+)(out) + 2 H(+)(in). Proton-coupled zinc ion antiporter mediating the entry of zinc into the lumen of pancreatic beta cell secretory granules, thereby regulating insulin secretion. The sequence is that of Proton-coupled zinc antiporter SLC30A8 from Homo sapiens (Human).